The following is a 289-amino-acid chain: Acetyl-coenzyme A carboxylase carboxyl transferase subunit beta (289 aa).

Residues 28 to 289 enclose the CoA carboxyltransferase N-terminal domain; it reads VMTKCPKCKK…QGGEMAVWQS (262 aa). Cys-32, Cys-35, Cys-51, and Cys-54 together coordinate Zn(2+). The C4-type zinc finger occupies 32–54; the sequence is CPKCKKIMYTKEVLKNLKVCVNC.

This sequence belongs to the AccD/PCCB family. Acetyl-CoA carboxylase is a heterohexamer composed of biotin carboxyl carrier protein (AccB), biotin carboxylase (AccC) and two subunits each of ACCase subunit alpha (AccA) and ACCase subunit beta (AccD). Zn(2+) is required as a cofactor.

The protein localises to the cytoplasm. It carries out the reaction N(6)-carboxybiotinyl-L-lysyl-[protein] + acetyl-CoA = N(6)-biotinyl-L-lysyl-[protein] + malonyl-CoA. It participates in lipid metabolism; malonyl-CoA biosynthesis; malonyl-CoA from acetyl-CoA: step 1/1. Component of the acetyl coenzyme A carboxylase (ACC) complex. Biotin carboxylase (BC) catalyzes the carboxylation of biotin on its carrier protein (BCCP) and then the CO(2) group is transferred by the transcarboxylase to acetyl-CoA to form malonyl-CoA. The polypeptide is Acetyl-coenzyme A carboxylase carboxyl transferase subunit beta (Bacillus thuringiensis (strain Al Hakam)).